Reading from the N-terminus, the 331-residue chain is L-lactate dehydrogenase A chain (331 aa).

NAD(+) contacts are provided by residues 29 to 57 (GMVG…MEDK) and Arg-98. Residues Arg-105, Asn-137, and Arg-168 each contribute to the substrate site. Residue Asn-137 coordinates NAD(+). The Proton acceptor role is filled by His-192. Substrate is bound at residue Thr-247.

It belongs to the LDH/MDH superfamily. LDH family. As to quaternary structure, homotetramer.

The protein localises to the cytoplasm. It carries out the reaction (S)-lactate + NAD(+) = pyruvate + NADH + H(+). The protein operates within fermentation; pyruvate fermentation to lactate; (S)-lactate from pyruvate: step 1/1. In terms of biological role, interconverts simultaneously and stereospecifically pyruvate and lactate with concomitant interconversion of NADH and NAD(+). The chain is L-lactate dehydrogenase A chain (ldha) from Gobionotothen gibberifrons (Humped rockcod).